A 401-amino-acid chain; its full sequence is Imidazolonepropionase (401 aa).

Positions 66 and 68 each coordinate Fe(3+). Zn(2+) is bound by residues histidine 66 and histidine 68. Arginine 75, tyrosine 138, and histidine 171 together coordinate 4-imidazolone-5-propanoate. Position 138 (tyrosine 138) interacts with N-formimidoyl-L-glutamate. Residue histidine 236 coordinates Fe(3+). A Zn(2+)-binding site is contributed by histidine 236. 4-imidazolone-5-propanoate is bound at residue glutamine 239. Fe(3+) is bound at residue aspartate 311. A Zn(2+)-binding site is contributed by aspartate 311. Residues asparagine 313 and glycine 315 each coordinate N-formimidoyl-L-glutamate. Residue threonine 316 participates in 4-imidazolone-5-propanoate binding.

Belongs to the metallo-dependent hydrolases superfamily. HutI family. It depends on Zn(2+) as a cofactor. Requires Fe(3+) as cofactor.

The protein localises to the cytoplasm. It carries out the reaction 4-imidazolone-5-propanoate + H2O = N-formimidoyl-L-glutamate. It participates in amino-acid degradation; L-histidine degradation into L-glutamate; N-formimidoyl-L-glutamate from L-histidine: step 3/3. Functionally, catalyzes the hydrolytic cleavage of the carbon-nitrogen bond in imidazolone-5-propanoate to yield N-formimidoyl-L-glutamate. It is the third step in the universal histidine degradation pathway. The sequence is that of Imidazolonepropionase from Pseudomonas putida (strain GB-1).